A 286-amino-acid polypeptide reads, in one-letter code: Light-independent protochlorophyllide reductase iron-sulfur ATP-binding protein (286 aa).

ATP is bound by residues 10-15 (GIGKST) and K39. A Mg(2+)-binding site is contributed by S14. Positions 95 and 129 each coordinate [4Fe-4S] cluster. Residue 180–181 (NR) participates in ATP binding.

It belongs to the NifH/BchL/ChlL family. In terms of assembly, homodimer. Protochlorophyllide reductase is composed of three subunits; ChlL, ChlN and ChlB. Requires [4Fe-4S] cluster as cofactor.

The catalysed reaction is chlorophyllide a + oxidized 2[4Fe-4S]-[ferredoxin] + 2 ADP + 2 phosphate = protochlorophyllide a + reduced 2[4Fe-4S]-[ferredoxin] + 2 ATP + 2 H2O. It participates in porphyrin-containing compound metabolism; chlorophyll biosynthesis (light-independent). Component of the dark-operative protochlorophyllide reductase (DPOR) that uses Mg-ATP and reduced ferredoxin to reduce ring D of protochlorophyllide (Pchlide) to form chlorophyllide a (Chlide). This reaction is light-independent. The L component serves as a unique electron donor to the NB-component of the complex, and binds Mg-ATP. The protein is Light-independent protochlorophyllide reductase iron-sulfur ATP-binding protein of Cyanothece sp. (strain PCC 7425 / ATCC 29141).